The following is a 551-amino-acid chain: Thermophilic beta-amylase (551 aa).

An N-terminal signal peptide occupies residues Met-1 to Ala-32. Position 73 (Asp-73) interacts with substrate. A Ca(2+)-binding site is contributed by Glu-80. 2 residues coordinate substrate: His-113 and Asp-121. Glu-167 provides a ligand contact to Ca(2+). Glu-195 functions as the Proton donor in the catalytic mechanism. Substrate contacts are provided by Lys-310, His-315, and Thr-353. The active-site Proton acceptor is the Glu-392. Substrate contacts are provided by residues Asn-393–Ala-394 and Arg-423. In terms of domain architecture, CBM20 spans Leu-448 to Asn-551.

This sequence belongs to the glycosyl hydrolase 14 family. In terms of assembly, monomer. It depends on Ca(2+) as a cofactor.

It catalyses the reaction Hydrolysis of (1-&gt;4)-alpha-D-glucosidic linkages in polysaccharides so as to remove successive maltose units from the non-reducing ends of the chains.. This Thermoanaerobacterium thermosulfurigenes (Clostridium thermosulfurogenes) protein is Thermophilic beta-amylase.